Reading from the N-terminus, the 694-residue chain is Elongation factor G (694 aa).

The region spanning 6–288 is the tr-type G domain; it reads KLYRNIGIAA…GVIEYLPSPT (283 aa). GTP-binding positions include 15–22, 86–90, and 140–143; these read AHVDAGKT, DTPGH, and NKMD.

The protein belongs to the TRAFAC class translation factor GTPase superfamily. Classic translation factor GTPase family. EF-G/EF-2 subfamily.

It localises to the cytoplasm. Catalyzes the GTP-dependent ribosomal translocation step during translation elongation. During this step, the ribosome changes from the pre-translocational (PRE) to the post-translocational (POST) state as the newly formed A-site-bound peptidyl-tRNA and P-site-bound deacylated tRNA move to the P and E sites, respectively. Catalyzes the coordinated movement of the two tRNA molecules, the mRNA and conformational changes in the ribosome. The polypeptide is Elongation factor G (Legionella pneumophila subsp. pneumophila (strain Philadelphia 1 / ATCC 33152 / DSM 7513)).